A 335-amino-acid chain; its full sequence is UDP-N-acetylenolpyruvoylglucosamine reductase 1 (335 aa).

In terms of domain architecture, FAD-binding PCMH-type spans Arg-36–Gly-202. The active site involves Arg-181. The Proton donor role is filled by Ser-231. Glu-306 is an active-site residue.

The protein belongs to the MurB family. FAD serves as cofactor.

Its subcellular location is the cytoplasm. The catalysed reaction is UDP-N-acetyl-alpha-D-muramate + NADP(+) = UDP-N-acetyl-3-O-(1-carboxyvinyl)-alpha-D-glucosamine + NADPH + H(+). The protein operates within cell wall biogenesis; peptidoglycan biosynthesis. Functionally, cell wall formation. The chain is UDP-N-acetylenolpyruvoylglucosamine reductase 1 (murB1) from Corynebacterium glutamicum (strain ATCC 13032 / DSM 20300 / JCM 1318 / BCRC 11384 / CCUG 27702 / LMG 3730 / NBRC 12168 / NCIMB 10025 / NRRL B-2784 / 534).